Consider the following 29-residue polypeptide: Cyclotide psyleio A (29 aa).

A cross-link (cyclopeptide (Gly-Asp)) is located at residues 1-29 (GLPICGETCFTGTCNTPGCSCTYPICTRD). 3 cysteine pairs are disulfide-bonded: cysteine 5-cysteine 19, cysteine 9-cysteine 21, and cysteine 14-cysteine 26.

Post-translationally, this is a cyclic peptide.

Functionally, probably participates in a plant defense mechanism. The chain is Cyclotide psyleio A from Psychotria brachyceras.